Here is a 290-residue protein sequence, read N- to C-terminus: 4-hydroxybenzoate octaprenyltransferase (290 aa).

8 helical membrane-spanning segments follow: residues 23–43, 46–66, 99–119, 141–161, 170–190, 213–233, 234–254, and 268–288; these read IGTL…GKGV, LSIL…GCVV, LFVV…AMTI, LPQF…YAAV, WLLL…YAMV, LIVG…GYLT, QMSG…IHQQ, and AFMD…LSYW.

This sequence belongs to the UbiA prenyltransferase family. Mg(2+) serves as cofactor.

Its subcellular location is the cell inner membrane. The catalysed reaction is all-trans-octaprenyl diphosphate + 4-hydroxybenzoate = 4-hydroxy-3-(all-trans-octaprenyl)benzoate + diphosphate. It functions in the pathway cofactor biosynthesis; ubiquinone biosynthesis. Functionally, catalyzes the prenylation of para-hydroxybenzoate (PHB) with an all-trans polyprenyl group. Mediates the second step in the final reaction sequence of ubiquinone-8 (UQ-8) biosynthesis, which is the condensation of the polyisoprenoid side chain with PHB, generating the first membrane-bound Q intermediate 3-octaprenyl-4-hydroxybenzoate. The sequence is that of 4-hydroxybenzoate octaprenyltransferase from Serratia proteamaculans (strain 568).